The sequence spans 87 residues: Kappa-bungarotoxin (87 aa).

The first 21 residues, 1-21, serve as a signal peptide directing secretion; sequence MKTLLLTLVVVTIVCLDLGYT. Cystine bridges form between Cys24-Cys42, Cys35-Cys63, Cys48-Cys52, Cys67-Cys79, and Cys80-Cys85.

Belongs to the three-finger toxin family. Long-chain subfamily. Kappa-neurotoxin sub-subfamily. In terms of assembly, homodimer and heterodimer; non-covalently linked. Expressed by the venom gland.

The protein resides in the secreted. In terms of biological role, postsynaptic neurotoxin that binds and inhibits neuronal nicotinic acetylcholine receptors (nAChR) with high affinity (IC(50)&lt;100 nM). Is a selective, and slowly reversible antagonist of alpha-3/CHRNA3-containing and some alpha-4/CHRNA4-containing AChRs. In Bungarus multicinctus (Many-banded krait), this protein is Kappa-bungarotoxin.